The sequence spans 693 residues: Elongation factor G (693 aa).

The 275-residue stretch at 8-282 folds into the tr-type G domain; sequence EKTRNIGIMA…AVIDYLPSPL (275 aa). Residues 17 to 24, 81 to 85, and 135 to 138 contribute to the GTP site; these read AHVDAGKT, DTPGH, and NKMD.

Belongs to the TRAFAC class translation factor GTPase superfamily. Classic translation factor GTPase family. EF-G/EF-2 subfamily.

Its subcellular location is the cytoplasm. Functionally, catalyzes the GTP-dependent ribosomal translocation step during translation elongation. During this step, the ribosome changes from the pre-translocational (PRE) to the post-translocational (POST) state as the newly formed A-site-bound peptidyl-tRNA and P-site-bound deacylated tRNA move to the P and E sites, respectively. Catalyzes the coordinated movement of the two tRNA molecules, the mRNA and conformational changes in the ribosome. The polypeptide is Elongation factor G (Streptococcus pneumoniae (strain Hungary19A-6)).